An 84-amino-acid polypeptide reads, in one-letter code: Large ribosomal subunit protein uL23 (84 aa).

The protein belongs to the universal ribosomal protein uL23 family. As to quaternary structure, part of the 50S ribosomal subunit. Contacts protein L29.

Functionally, binds to 23S rRNA. One of the proteins that surrounds the polypeptide exit tunnel on the outside of the ribosome. This is Large ribosomal subunit protein uL23 from Thermoplasma acidophilum (strain ATCC 25905 / DSM 1728 / JCM 9062 / NBRC 15155 / AMRC-C165).